A 403-amino-acid polypeptide reads, in one-letter code: Argininosuccinate synthase 1 (403 aa).

ATP contacts are provided by residues Ser10–Ser18 and Ala37. 2 residues coordinate L-citrulline: Tyr88 and Ser93. Gly118 is a binding site for ATP. Residues Thr120, Asn124, and Asp125 each contribute to the L-aspartate site. Residue Asn124 participates in L-citrulline binding. Residues Arg128, Ser179, Ser188, Glu264, and Tyr276 each contribute to the L-citrulline site.

Belongs to the argininosuccinate synthase family. Type 1 subfamily. Homotetramer.

Its subcellular location is the cytoplasm. It catalyses the reaction L-citrulline + L-aspartate + ATP = 2-(N(omega)-L-arginino)succinate + AMP + diphosphate + H(+). Its pathway is amino-acid biosynthesis; L-arginine biosynthesis; L-arginine from L-ornithine and carbamoyl phosphate: step 2/3. The polypeptide is Argininosuccinate synthase 1 (Rhizobium johnstonii (strain DSM 114642 / LMG 32736 / 3841) (Rhizobium leguminosarum bv. viciae)).